Consider the following 248-residue polypeptide: DNA repair protein RecO (248 aa).

The protein belongs to the RecO family.

In terms of biological role, involved in DNA repair and RecF pathway recombination. The polypeptide is DNA repair protein RecO (Thermoanaerobacter sp. (strain X514)).